The chain runs to 180 residues: Endothelin-2 (180 aa).

Positions 1–26 (MVALPTAWCSVALALLVALHEGKSQS) are cleaved as a signal peptide. A propeptide spanning residues 27-47 (AATSEEPPAPSARARGSHLRL) is cleaved from the precursor. Disulfide bonds link Cys50–Cys64 and Cys52–Cys60. A propeptide spanning residues 71-180 (VNTPGQTAPY…ESSHSRWRKR (110 aa)) is cleaved from the precursor. The segment at 97-112 (CECYSTRDSACVTFCH) is endothelin-like. A disordered region spans residues 157-180 (NFTRHQQQKATREPESSHSRWRKR).

Belongs to the endothelin/sarafotoxin family.

It is found in the secreted. Functionally, endothelins are endothelium-derived vasoconstrictor peptides. In Atelerix albiventris (Middle-African hedgehog), this protein is Endothelin-2 (EDN2).